The primary structure comprises 151 residues: Putative pre-16S rRNA nuclease (151 aa).

Belongs to the YqgF nuclease family.

It is found in the cytoplasm. Functionally, could be a nuclease involved in processing of the 5'-end of pre-16S rRNA. The protein is Putative pre-16S rRNA nuclease of Pelagibacter ubique (strain HTCC1062).